We begin with the raw amino-acid sequence, 560 residues long: Embryonal Fyn-associated substrate (560 aa).

Residues 5–68 form the SH3 domain; that stretch reads TSAQLARALY…PANRVKLLPA (64 aa). Disordered regions lie at residues 176–219 and 241–372; these read VVPQ…LYAA and ANGE…NEYE. The segment covering 198–210 has biased composition (basic and acidic residues); the sequence is AELERDPEWEGGR. Tyr-253 is subject to Phosphotyrosine; by SRC. The span at 259 to 268 shows a compositional bias: pro residues; the sequence is GPEPPSPEPP. 2 short sequence motifs (SH3-binding) span residues 304 to 310 and 334 to 340; these read RPLPALP and RPLPPPP. Low complexity predominate over residues 305–315; sequence PLPALPVSEAP. Residues 351–361 show a composition bias toward basic and acidic residues; that stretch reads PEGDPECREVA. A divergent helix-loop-helix motif region spans residues 437 to 487; that stretch reads FYAGQCQSHYSALQAAVAALVASTQANQPPCLFVPHGKRVVVAAHRLVFVG.

Belongs to the CAS family. In terms of processing, phosphorylated on multiple tyrosine residues. Phosphorylated on tyrosines by FYN and SRC. In terms of tissue distribution, widely expressed. Higher levels found in placenta and embryo. Lower levels found in brain, brainstem, muscle and lung. No expression in liver and intestine.

Docking protein which plays a central coordinating role for tyrosine-kinase-based signaling related to cell adhesion. May serve as an activator of SRC and a downstream effector. Interacts with the SH3 domain of FYN and with CRK, SRC, and YES. This chain is Embryonal Fyn-associated substrate (Efs), found in Mus musculus (Mouse).